Consider the following 272-residue polypeptide: HMP-PP phosphatase (272 aa).

Residue Asp-8 is the Nucleophile of the active site. Positions 8, 10, and 212 each coordinate Mg(2+).

It belongs to the HAD-like hydrolase superfamily. Cof family. Mg(2+) is required as a cofactor.

It carries out the reaction 4-amino-2-methyl-5-(diphosphooxymethyl)pyrimidine + H2O = 4-amino-2-methyl-5-(phosphooxymethyl)pyrimidine + phosphate + H(+). Its function is as follows. Catalyzes the hydrolysis of 4-amino-2-methyl-5-hydroxymethylpyrimidine pyrophosphate (HMP-PP) to 4-amino-2-methyl-5-hydroxymethylpyrimidine phosphate (HMP-P). The chain is HMP-PP phosphatase from Salmonella arizonae (strain ATCC BAA-731 / CDC346-86 / RSK2980).